The following is a 145-amino-acid chain: 3-hydroxyacyl-[acyl-carrier-protein] dehydratase FabZ (145 aa).

Residue H49 is part of the active site.

It belongs to the thioester dehydratase family. FabZ subfamily.

The protein localises to the cytoplasm. The enzyme catalyses a (3R)-hydroxyacyl-[ACP] = a (2E)-enoyl-[ACP] + H2O. Involved in unsaturated fatty acids biosynthesis. Catalyzes the dehydration of short chain beta-hydroxyacyl-ACPs and long chain saturated and unsaturated beta-hydroxyacyl-ACPs. This is 3-hydroxyacyl-[acyl-carrier-protein] dehydratase FabZ from Anaplasma phagocytophilum (strain HZ).